Consider the following 354-residue polypeptide: 5,10-methenyltetrahydromethanopterin hydrogenase (354 aa).

The protein belongs to the HMD family.

It catalyses the reaction 5,10-methenyl-5,6,7,8-tetrahydromethanopterin + H2 = 5,10-methylenetetrahydromethanopterin + H(+). It functions in the pathway one-carbon metabolism; methanogenesis from CO(2); 5,10-methylene-5,6,7,8-tetrahydromethanopterin from 5,10-methenyl-5,6,7,8-tetrahydromethanopterin (hydrogen route): step 1/1. Catalyzes the reversible reduction of methenyl-H(4)MPT(+) to methylene-H(4)MPT. The sequence is that of 5,10-methenyltetrahydromethanopterin hydrogenase from Methanococcus vannielii (strain ATCC 35089 / DSM 1224 / JCM 13029 / OCM 148 / SB).